The sequence spans 276 residues: Ribosomal RNA small subunit methyltransferase A (276 aa).

Positions 19, 21, 46, 71, 94, and 117 each coordinate S-adenosyl-L-methionine.

This sequence belongs to the class I-like SAM-binding methyltransferase superfamily. rRNA adenine N(6)-methyltransferase family. RsmA subfamily.

The protein localises to the cytoplasm. It carries out the reaction adenosine(1518)/adenosine(1519) in 16S rRNA + 4 S-adenosyl-L-methionine = N(6)-dimethyladenosine(1518)/N(6)-dimethyladenosine(1519) in 16S rRNA + 4 S-adenosyl-L-homocysteine + 4 H(+). Its function is as follows. Specifically dimethylates two adjacent adenosines (A1518 and A1519) in the loop of a conserved hairpin near the 3'-end of 16S rRNA in the 30S particle. May play a critical role in biogenesis of 30S subunits. The sequence is that of Ribosomal RNA small subunit methyltransferase A from Burkholderia ambifaria (strain ATCC BAA-244 / DSM 16087 / CCUG 44356 / LMG 19182 / AMMD) (Burkholderia cepacia (strain AMMD)).